Consider the following 304-residue polypeptide: N-acetylglucosaminyl-phosphatidylinositol de-N-acetylase (304 aa).

Over 1 to 20 the chain is Lumenal; sequence MKMLRRTKVNFSKLLYKITK. A helical membrane pass occupies residues 21-38; it reads LAIVLTILYIYFTPKIVS. The Cytoplasmic portion of the chain corresponds to 39–304; sequence RNNASLQHIF…FVNEFDVYTY (266 aa).

Belongs to the PIGL family.

It is found in the endoplasmic reticulum membrane. It catalyses the reaction a 6-(N-acetyl-alpha-D-glucosaminyl)-1-(1,2-diacyl-sn-glycero-3-phospho)-1D-myo-inositol + H2O = a 6-(alpha-D-glucosaminyl)-1-(1,2-diacyl-sn-glycero-3-phospho)-1D-myo-inositol + acetate. The protein operates within glycolipid biosynthesis; glycosylphosphatidylinositol-anchor biosynthesis. Functionally, involved in the second step of GPI biosynthesis. De-N-acetylation of N-acetylglucosaminyl-phosphatidylinositol. The sequence is that of N-acetylglucosaminyl-phosphatidylinositol de-N-acetylase (GPI12) from Saccharomyces cerevisiae (strain ATCC 204508 / S288c) (Baker's yeast).